Consider the following 304-residue polypeptide: Hairy/enhancer-of-split related with YRPW motif protein 1 (304 aa).

The tract at residues 1-52 (MKRAHPEYSSSDSELDETIEVEKESADENGNLSSALGSMSPTTSSQILARKR) is disordered. Residues 28 to 47 (ENGNLSSALGSMSPTTSSQI) show a composition bias toward polar residues. Residues 48 to 117 (LARKRRRGII…GGKGYFDAHA (70 aa)) form a transcriptional repression and interaction with NCOR1 and SIN3A region. The bHLH domain occupies 49–104 (ARKRRRGIIEKRRRDRINNSLSELRRLVPSAFEKQGSAKLEKAEILQMTVDHLKML). The Orange domain maps to 122-158 (YRSLGFRECLAEVARYLSIIEGLDASDPLRVRLVSHL). The segment at 196-234 (LPQNGHGNAGTTASPTEPHHQGRLGSAHPEAPALRAPPS) is disordered. A compositionally biased stretch (polar residues) spans 200–210 (GHGNAGTTASP). Residues 294–297 (YRPW) carry the YRPW motif motif.

The protein belongs to the HEY family. In terms of assembly, self-associates. Interacts with HES1 and HEYL. Interacts with HDAC1, NCOR1 and SIN3A. Interacts with GATA4 and GATA6. Interacts with CCDC89/BOIP. As to expression, expressed in the somitic mesoderm, the central nervous system, the kidney, the heart, nasal epithelium, and limbs.

The protein resides in the nucleus. Functionally, transcriptional repressor which binds preferentially to the canonical E box sequence 5'-CACGTG-3'. Downstream effector of Notch signaling required for cardiovascular development. Specifically required for the Notch-induced endocardial epithelial to mesenchymal transition, which is itself criticial for cardiac valve and septum development. May be required in conjunction with HEY2 to specify arterial cell fate or identity. Promotes maintenance of neuronal precursor cells and glial versus neuronal fate specification. Represses transcription by the cardiac transcriptional activators GATA4 and GATA6 and by the neuronal bHLH factors ASCL1/MASH1 and NEUROD4/MATH3. Involved in the regulation of liver cancer cells self-renewal. This is Hairy/enhancer-of-split related with YRPW motif protein 1 (HEY1) from Homo sapiens (Human).